A 393-amino-acid polypeptide reads, in one-letter code: Putative bacilysin exporter BacE (393 aa).

10 helical membrane passes run 11-31 (LLFGQALSFMGDYCVLPALLI), 43-63 (SGVIAVRSIPMVFQPFLGVLV), 69-89 (VKIMLWTDVIRGVIFLGLTFL), 92-112 (GEYPLLFLALLFVSYGSGVFF), 133-155 (LFAKATTISIIVGAAAGGLFLLG), 160-177 (LAVAFNGVTYLVSAFFIS), 215-235 (MFTMITMALLWGVVYSYFPIV), 244-264 (IGNFILTFCIGFGGFIGAALV), 287-307 (ALFLFTPIFAVSVIAAILFFI), and 353-373 (IVDAAVIMAFIVLLVSGLFLH).

The protein belongs to the major facilitator superfamily.

It is found in the cell membrane. Part of the bacilysin biosynthesis operon. May be involved in self-resistance to bacilysin by permitting efflux of this antibiotic. The polypeptide is Putative bacilysin exporter BacE (bacE) (Bacillus subtilis).